Consider the following 338-residue polypeptide: Nicotinate-nucleotide--dimethylbenzimidazole phosphoribosyltransferase (338 aa).

Residue E305 is the Proton acceptor of the active site.

The protein belongs to the CobT family.

The enzyme catalyses 5,6-dimethylbenzimidazole + nicotinate beta-D-ribonucleotide = alpha-ribazole 5'-phosphate + nicotinate + H(+). It functions in the pathway nucleoside biosynthesis; alpha-ribazole biosynthesis; alpha-ribazole from 5,6-dimethylbenzimidazole: step 1/2. Catalyzes the synthesis of alpha-ribazole-5'-phosphate from nicotinate mononucleotide (NAMN) and 5,6-dimethylbenzimidazole (DMB). This Rhizobium etli (strain CIAT 652) protein is Nicotinate-nucleotide--dimethylbenzimidazole phosphoribosyltransferase.